The chain runs to 299 residues: Inosose dehydratase (299 aa).

It belongs to the IolE/MocC family. Glutathione is required as a cofactor. Co(2+) serves as cofactor. It depends on Mn(2+) as a cofactor.

The catalysed reaction is scyllo-inosose = 3D-3,5/4-trihydroxycyclohexane-1,2-dione + H2O. Its function is as follows. Catalyzes the dehydration of inosose (2-keto-myo-inositol, 2KMI or 2,4,6/3,5-pentahydroxycyclohexanone) to 3D-(3,5/4)-trihydroxycyclohexane-1,2-dione (D-2,3-diketo-4-deoxy-epi-inositol). The chain is Inosose dehydratase from Klebsiella pneumoniae subsp. pneumoniae (strain ATCC 700721 / MGH 78578).